A 625-amino-acid chain; its full sequence is Chaperone protein HtpG (625 aa).

The segment at 1-341 is a; substrate-binding; sequence MERKEFKAES…SEDLSLNISR (341 aa). The segment at 342–551 is b; the sequence is EMLQHDRQLK…EGEVSIEMEK (210 aa). Positions 552-625 are c; it reads VLRAMPDNQN…FSNDICKVMA (74 aa).

Belongs to the heat shock protein 90 family. As to quaternary structure, homodimer.

The protein resides in the cytoplasm. Molecular chaperone. Has ATPase activity. This Halalkalibacterium halodurans (strain ATCC BAA-125 / DSM 18197 / FERM 7344 / JCM 9153 / C-125) (Bacillus halodurans) protein is Chaperone protein HtpG.